The primary structure comprises 458 residues: tRNA-2-methylthio-N(6)-dimethylallyladenosine synthase (458 aa).

The 118-residue stretch at 3-120 folds into the MTTase N-terminal domain; it reads QKLYIETFGC…LPSMLEQVRC (118 aa). [4Fe-4S] cluster contacts are provided by Cys12, Cys49, Cys83, Cys157, Cys161, and Cys164. The Radical SAM core domain maps to 143–375; it reads RADGPKAFVS…QAKIADNAAK (233 aa). Residues 378 to 441 enclose the TRAM domain; the sequence is ASMVGSIQSV…PNSLRGRLIG (64 aa).

Belongs to the methylthiotransferase family. MiaB subfamily. In terms of assembly, monomer. [4Fe-4S] cluster is required as a cofactor.

Its subcellular location is the cytoplasm. The enzyme catalyses N(6)-dimethylallyladenosine(37) in tRNA + (sulfur carrier)-SH + AH2 + 2 S-adenosyl-L-methionine = 2-methylsulfanyl-N(6)-dimethylallyladenosine(37) in tRNA + (sulfur carrier)-H + 5'-deoxyadenosine + L-methionine + A + S-adenosyl-L-homocysteine + 2 H(+). In terms of biological role, catalyzes the methylthiolation of N6-(dimethylallyl)adenosine (i(6)A), leading to the formation of 2-methylthio-N6-(dimethylallyl)adenosine (ms(2)i(6)A) at position 37 in tRNAs that read codons beginning with uridine. The sequence is that of tRNA-2-methylthio-N(6)-dimethylallyladenosine synthase from Methylococcus capsulatus (strain ATCC 33009 / NCIMB 11132 / Bath).